The chain runs to 475 residues: Cytosolic non-specific dipeptidase (475 aa).

Ala-2 carries the N-acetylalanine modification. The residue at position 9 (Lys-9) is an N6-acetyllysine. A Phosphoserine modification is found at Ser-58. A Mn(2+)-binding site is contributed by His-99. Asp-101 is a catalytic residue. Position 132 (Asp-132) interacts with Mn(2+). Glu-166 (proton acceptor) is an active-site residue. Substrate-binding positions include 166 to 167 (EE), Asp-195, and His-228. 2 residues coordinate Mn(2+): Glu-167 and Asp-195. Ser-299 carries the post-translational modification Phosphoserine. Residues Thr-330, Arg-343, Ser-417, and His-445 each contribute to the substrate site. Position 445 (His-445) interacts with Mn(2+).

Belongs to the peptidase M20A family. As to quaternary structure, homodimer. The cofactor is Mn(2+).

It is found in the cytoplasm. The enzyme catalyses Hydrolysis of dipeptides, preferentially hydrophobic dipeptides including prolyl amino acids.. It catalyses the reaction L-threonyl-L-threonine + H2O = 2 L-threonine. The catalysed reaction is L-threonyl-L-serine + H2O = L-threonine + L-serine. It carries out the reaction L-seryl-L-threonine + H2O = L-threonine + L-serine. The enzyme catalyses L-cysteinylglycine + H2O = L-cysteine + glycine. It catalyses the reaction (S)-lactate + L-phenylalanine = N-[(S)-lactoyl]-L-phenylalanine + H2O. Functionally, catalyzes the peptide bond hydrolysis in dipeptides, displaying a non-redundant activity toward threonyl dipeptides. Mediates threonyl dipeptide catabolism in a tissue-specific way. Has high dipeptidase activity toward cysteinylglycine, an intermediate metabolite in glutathione metabolism. Metabolizes N-lactoyl-amino acids, both through hydrolysis to form lactic acid and amino acids, as well as through their formation by reverse proteolysis. Plays a role in the regulation of cell cycle arrest and apoptosis. The polypeptide is Cytosolic non-specific dipeptidase (CNDP2) (Pongo abelii (Sumatran orangutan)).